A 75-amino-acid chain; its full sequence is DNA-directed RNA polymerase subunit omega (75 aa).

It belongs to the RNA polymerase subunit omega family. In cyanobacteria the RNAP catalytic core is composed of 2 alpha, 1 beta, 1 beta', 1 gamma and 1 omega subunit. When a sigma factor is associated with the core the holoenzyme is formed, which can initiate transcription.

The catalysed reaction is RNA(n) + a ribonucleoside 5'-triphosphate = RNA(n+1) + diphosphate. Promotes RNA polymerase assembly. Latches the N- and C-terminal regions of the beta' subunit thereby facilitating its interaction with the beta and alpha subunits. This Picosynechococcus sp. (strain ATCC 27264 / PCC 7002 / PR-6) (Agmenellum quadruplicatum) protein is DNA-directed RNA polymerase subunit omega.